Consider the following 123-residue polypeptide: Small ribosomal subunit protein uS12cz/uS12cy (123 aa).

Belongs to the universal ribosomal protein uS12 family. Part of the 30S ribosomal subunit.

It localises to the plastid. Its subcellular location is the chloroplast. In terms of biological role, with S4 and S5 plays an important role in translational accuracy. Located at the interface of the 30S and 50S subunits. The sequence is that of Small ribosomal subunit protein uS12cz/uS12cy (rps12-A) from Atropa belladonna (Belladonna).